Here is a 304-residue protein sequence, read N- to C-terminus: 6-dehydroglucose reductase (304 aa).

NADP(+)-binding residues include Trp-28, Arg-29, and Asp-56. Tyr-61 serves as the catalytic Proton donor. D-glucose contacts are provided by Tyr-61, His-133, and Arg-134. Residues Ser-163, Asn-164, Gln-185, Ser-215, Leu-217, Gly-219, Gly-268, Ser-269, Gln-270, and Arg-274 each coordinate NADP(+).

The protein belongs to the aldo/keto reductase family.

The enzyme catalyses D-glucose + NADP(+) = 6-dehydro-D-glucose + NADPH + H(+). In terms of biological role, part of the alkanesulfonate monooxygenase (sulfo-ASMO) pathway, a D-sulfoquinovose degradation pathway that enables the complete utilization of all carbons within sulfoquinovose (SQ) with concomitant production of inorganic sulfite. Catalyzes the NADP-dependent reduction of 6-dehydro-D-glucose to D-glucose. Can also catalyze the reversible reaction, the formation of 6-dehydro-D-glucose from D-glucose in the presence of NADP(+). The sequence is that of 6-dehydroglucose reductase from Novosphingobium aromaticivorans (strain ATCC 700278 / DSM 12444 / CCUG 56034 / CIP 105152 / NBRC 16084 / F199).